The chain runs to 150 residues: Dihydroneopterin triphosphate diphosphatase (150 aa).

Residues 5 to 146 (VYKRPVSILV…SNRQAIEQFV (142 aa)) form the Nudix hydrolase domain. The substrate site is built by lysine 7, arginine 29, and threonine 40. The short motif at 41-62 (GSVEEGETAPQAAMREVKEEVT) is the Nudix box element. Residues glutamate 56 and glutamate 60 each coordinate Mg(2+). Position 81–84 (81–84 (FEIF)) interacts with substrate. Glutamate 117 provides a ligand contact to Mg(2+). Serine 135 serves as a coordination point for substrate.

It belongs to the Nudix hydrolase family. Mg(2+) is required as a cofactor.

It carries out the reaction 7,8-dihydroneopterin 3'-triphosphate + H2O = 7,8-dihydroneopterin 3'-phosphate + diphosphate + H(+). Functionally, catalyzes the hydrolysis of dihydroneopterin triphosphate to dihydroneopterin monophosphate and pyrophosphate. Required for efficient folate biosynthesis. Can also hydrolyze nucleoside triphosphates with a preference for dATP. In Escherichia coli O157:H7, this protein is Dihydroneopterin triphosphate diphosphatase (nudB).